The sequence spans 150 residues: Deoxyuridine 5'-triphosphate nucleotidohydrolase (150 aa).

Residues 69 to 71 (RSG), Asn-82, 86 to 88 (LID), and Lys-96 each bind substrate.

This sequence belongs to the dUTPase family. Mg(2+) serves as cofactor.

It carries out the reaction dUTP + H2O = dUMP + diphosphate + H(+). The protein operates within pyrimidine metabolism; dUMP biosynthesis; dUMP from dCTP (dUTP route): step 2/2. In terms of biological role, this enzyme is involved in nucleotide metabolism: it produces dUMP, the immediate precursor of thymidine nucleotides and it decreases the intracellular concentration of dUTP so that uracil cannot be incorporated into DNA. The polypeptide is Deoxyuridine 5'-triphosphate nucleotidohydrolase (Neisseria gonorrhoeae (strain ATCC 700825 / FA 1090)).